The chain runs to 412 residues: UPF0761 membrane protein LPC_2650 (412 aa).

A run of 6 helical transmembrane segments spans residues 36-56 (ALAFTSLLAVVPLMSVGLAIF), 99-119 (LSIWGVVFLIFTALLVMFTIE), 137-157 (AFLLYWAIISLAPVLLGLSLA), 177-197 (ILHYSPFFLSLIGFTFLYVVV), 210-230 (GGLVAAILFESAKHAFAYYLI), and 241-261 (AFATVPIFFIWVYWVWIITLL).

The protein belongs to the UPF0761 family.

It localises to the cell inner membrane. This is UPF0761 membrane protein LPC_2650 from Legionella pneumophila (strain Corby).